The primary structure comprises 202 residues: Urease accessory protein UreG (202 aa).

Residue 10-17 (GPVGSGKT) coordinates GTP.

Belongs to the SIMIBI class G3E GTPase family. UreG subfamily. As to quaternary structure, homodimer. UreD, UreF and UreG form a complex that acts as a GTP-hydrolysis-dependent molecular chaperone, activating the urease apoprotein by helping to assemble the nickel containing metallocenter of UreC. The UreE protein probably delivers the nickel.

The protein localises to the cytoplasm. Its function is as follows. Facilitates the functional incorporation of the urease nickel metallocenter. This process requires GTP hydrolysis, probably effectuated by UreG. This Synechococcus sp. (strain JA-3-3Ab) (Cyanobacteria bacterium Yellowstone A-Prime) protein is Urease accessory protein UreG.